We begin with the raw amino-acid sequence, 83 residues long: Cytochrome b559 subunit alpha (83 aa).

Residues 21-35 (VIHSITIPSLFIAGW) traverse the membrane as a helical segment. Heme is bound at residue H23.

Belongs to the PsbE/PsbF family. Heterodimer of an alpha subunit and a beta subunit. PSII is composed of 1 copy each of membrane proteins PsbA, PsbB, PsbC, PsbD, PsbE, PsbF, PsbH, PsbI, PsbJ, PsbK, PsbL, PsbM, PsbT, PsbX, PsbY, PsbZ, Psb30/Ycf12, at least 3 peripheral proteins of the oxygen-evolving complex and a large number of cofactors. It forms dimeric complexes. The cofactor is heme b.

The protein localises to the plastid. It localises to the chloroplast thylakoid membrane. Its function is as follows. This b-type cytochrome is tightly associated with the reaction center of photosystem II (PSII). PSII is a light-driven water:plastoquinone oxidoreductase that uses light energy to abstract electrons from H(2)O, generating O(2) and a proton gradient subsequently used for ATP formation. It consists of a core antenna complex that captures photons, and an electron transfer chain that converts photonic excitation into a charge separation. The sequence is that of Cytochrome b559 subunit alpha from Zygnema circumcarinatum (Green alga).